Consider the following 108-residue polypeptide: UPF0060 membrane protein Sca_1835 (108 aa).

A run of 4 helical transmembrane segments spans residues 5-25, 34-54, 60-80, and 84-104; these read ILIF…IWLW, FGLL…FQVF, VYAA…YVFD, and PDKY…IMLL.

Belongs to the UPF0060 family.

The protein localises to the cell membrane. The polypeptide is UPF0060 membrane protein Sca_1835 (Staphylococcus carnosus (strain TM300)).